A 694-amino-acid polypeptide reads, in one-letter code: Elongation factor G (694 aa).

The 276-residue stretch at 10-285 (EKTRNIGIMA…AVLDYLPSPV (276 aa)) folds into the tr-type G domain. Residues 19-26 (AHIDAGKT), 83-87 (DTPGH), and 137-140 (NKMD) contribute to the GTP site.

It belongs to the TRAFAC class translation factor GTPase superfamily. Classic translation factor GTPase family. EF-G/EF-2 subfamily.

Its subcellular location is the cytoplasm. Functionally, catalyzes the GTP-dependent ribosomal translocation step during translation elongation. During this step, the ribosome changes from the pre-translocational (PRE) to the post-translocational (POST) state as the newly formed A-site-bound peptidyl-tRNA and P-site-bound deacylated tRNA move to the P and E sites, respectively. Catalyzes the coordinated movement of the two tRNA molecules, the mRNA and conformational changes in the ribosome. The protein is Elongation factor G of Limosilactobacillus fermentum (strain NBRC 3956 / LMG 18251) (Lactobacillus fermentum).